The following is a 191-amino-acid chain: Protein Ves (191 aa).

This sequence belongs to the Ves family.

The sequence is that of Protein Ves from Escherichia coli O8 (strain IAI1).